The sequence spans 594 residues: Trehalase (594 aa).

The first 27 residues, 1–27 (MDFLNKKIQKILFICILSFLIVNLTKS), serve as a signal peptide directing secretion. 4 N-linked (GlcNAc...) asparagine glycosylation sites follow: Asn-56, Asn-70, Asn-97, and Asn-166. Residues Arg-190, 197–198 (WD), and Asn-234 contribute to the substrate site. Asn-242 carries N-linked (GlcNAc...) asparagine glycosylation. Substrate is bound at residue 243–245 (RSQ). 2 N-linked (GlcNAc...) asparagine glycosylation sites follow: Asn-261 and Asn-305. Residues 312 to 314 (RPE) and Gly-346 each bind substrate. Asp-348 (proton donor/acceptor) is an active-site residue. N-linked (GlcNAc...) asparagine glycosylation is found at Asn-361, Asn-395, Asn-513, and Asn-537. Glu-549 serves as the catalytic Proton donor/acceptor. Residue Glu-564 coordinates substrate.

The protein belongs to the glycosyl hydrolase 37 family.

It catalyses the reaction alpha,alpha-trehalose + H2O = alpha-D-glucose + beta-D-glucose. The polypeptide is Trehalase (treh) (Dictyostelium discoideum (Social amoeba)).